The following is a 177-amino-acid chain: Interleukin-10 (177 aa).

A signal peptide spans 1–19; the sequence is MPSSSAVLCCLVFLAGVAA. 2 disulfides stabilise this stretch: cysteine 31-cysteine 127 and cysteine 81-cysteine 133. The N-linked (GlcNAc...) asparagine glycan is linked to asparagine 135.

The protein belongs to the IL-10 family. Homodimer. Interacts with IL10RA and IL10RB.

The protein localises to the secreted. Functionally, major immune regulatory cytokine that acts on many cells of the immune system where it has profound anti-inflammatory functions, limiting excessive tissue disruption caused by inflammation. Mechanistically, IL10 binds to its heterotetrameric receptor comprising IL10RA and IL10RB leading to JAK1 and STAT2-mediated phosphorylation of STAT3. In turn, STAT3 translocates to the nucleus where it drives expression of anti-inflammatory mediators. Targets antigen-presenting cells (APCs) such as macrophages and monocytes and inhibits their release of pro-inflammatory cytokines including granulocyte-macrophage colony-stimulating factor /GM-CSF, granulocyte colony-stimulating factor/G-CSF, IL-1 alpha, IL-1 beta, IL-6, IL-8 and TNF-alpha. Also interferes with antigen presentation by reducing the expression of MHC-class II and co-stimulatory molecules, thereby inhibiting their ability to induce T cell activation. In addition, controls the inflammatory response of macrophages by reprogramming essential metabolic pathways including mTOR signaling. This is Interleukin-10 (IL10) from Ovis aries (Sheep).